Here is a 49-residue protein sequence, read N- to C-terminus: Large ribosomal subunit protein bL33B (49 aa).

Belongs to the bacterial ribosomal protein bL33 family.

The protein is Large ribosomal subunit protein bL33B (rpmG2) of Staphylococcus epidermidis (strain ATCC 12228 / FDA PCI 1200).